The sequence spans 29 residues: U-homostoxin-Hdu1a (29 aa).

Thr-1 carries O-linked (GlcNAc...) threonine glycosylation. Disulfide bonds link Cys-7–Cys-19 and Cys-10–Cys-25.

The protein belongs to the sea anemone BBH family.

It is found in the secreted. The protein localises to the nematocyst. The protein is U-homostoxin-Hdu1a of Homostichanthus duerdeni (Sea anemone).